The primary structure comprises 435 residues: Adenylosuccinate synthetase (435 aa).

Residues 11–17 and 39–41 contribute to the GTP site; these read GDEGKGK and GHT. Asp-12 acts as the Proton acceptor in catalysis. The Mg(2+) site is built by Asp-12 and Gly-39. Residues 12–15, 37–40, Thr-134, Arg-148, Asn-230, Thr-245, and Arg-309 contribute to the IMP site; these read DEGK and NAGH. His-40 functions as the Proton donor in the catalytic mechanism. Residue 305–311 coordinates substrate; sequence VTTGRKR. GTP-binding positions include Arg-311, 337–339, and 419–421; these read KLD and GTG.

Belongs to the adenylosuccinate synthetase family. As to quaternary structure, homodimer. Mg(2+) is required as a cofactor.

It is found in the cytoplasm. The enzyme catalyses IMP + L-aspartate + GTP = N(6)-(1,2-dicarboxyethyl)-AMP + GDP + phosphate + 2 H(+). The protein operates within purine metabolism; AMP biosynthesis via de novo pathway; AMP from IMP: step 1/2. Functionally, plays an important role in the de novo pathway and in the salvage pathway of purine nucleotide biosynthesis. Catalyzes the first committed step in the biosynthesis of AMP from IMP. The protein is Adenylosuccinate synthetase of Zygosaccharomyces rouxii (strain ATCC 2623 / CBS 732 / NBRC 1130 / NCYC 568 / NRRL Y-229).